Consider the following 382-residue polypeptide: F-box protein At3g27290 (382 aa).

The F-box domain maps to 16–105 (RKLELGLGEF…VDQMLFETLS (90 aa)).

The polypeptide is F-box protein At3g27290 (Arabidopsis thaliana (Mouse-ear cress)).